The chain runs to 61 residues: Small ribosomal subunit protein uS14B (61 aa).

Zn(2+) contacts are provided by Cys24, Cys27, Cys40, and Cys43.

Belongs to the universal ribosomal protein uS14 family. Zinc-binding uS14 subfamily. In terms of assembly, part of the 30S ribosomal subunit. Contacts proteins S3 and S10. It depends on Zn(2+) as a cofactor.

Functionally, binds 16S rRNA, required for the assembly of 30S particles and may also be responsible for determining the conformation of the 16S rRNA at the A site. The chain is Small ribosomal subunit protein uS14B from Mycobacteroides abscessus (strain ATCC 19977 / DSM 44196 / CCUG 20993 / CIP 104536 / JCM 13569 / NCTC 13031 / TMC 1543 / L948) (Mycobacterium abscessus).